The sequence spans 537 residues: Chaperonin GroEL 1 (537 aa).

Residues 29–32 (TLGP), 86–90 (DGTTT), Gly-413, and Asp-494 contribute to the ATP site.

The protein belongs to the chaperonin (HSP60) family. In terms of assembly, forms a cylinder of 14 subunits composed of two heptameric rings stacked back-to-back. Interacts with the co-chaperonin GroES.

Its subcellular location is the cytoplasm. The catalysed reaction is ATP + H2O + a folded polypeptide = ADP + phosphate + an unfolded polypeptide.. In terms of biological role, together with its co-chaperonin GroES, plays an essential role in assisting protein folding. The GroEL-GroES system forms a nano-cage that allows encapsulation of the non-native substrate proteins and provides a physical environment optimized to promote and accelerate protein folding. In Mycobacterium leprae (strain TN), this protein is Chaperonin GroEL 1.